The primary structure comprises 793 residues: MDSEQPDSLDGWVPLREDLFPEPERHQLRFLVAWNAAKGQFAVTCHDRTAQRRRRERREAGDGGCSWAGVLSPAGFRGAHRQLAALWPALEPCFPPLPPELDAASGAGWGLGRGLWALLWPLLWPAPADPGDSALQELCRQLEHYLGLAAEGCGGATVRDVLFPAPGDSADCEGLSEFRERTLRARLGQTATRLHQVLQDHGKANTMVALMKVYQEEDELYQELVTMATTFFQYLLQPFRDMREVATSCKLGILKSLDEDELGPRRVAALQKEASEWTRQAEEAVGSIQDITVNYFKETVTALTGMQKQMEQDQKRFGQAAWATAMPRLENLKLMLARETLQLMRAKELCLKHRQAEIQRKVEDLPRQGKQLDVVDELEIQCYEIQLELYDVKLEMLRNEETILVTRLDSVKRLITEKQAEVIYYDPCESPEELQSLAPDLELHLGDNRELRALSQQCQRLEAQRGRICSRRALLRNRKDHCRENHQLRLQQAKQSLRHLHQHHSIQMKRDKVKEEEQKKKEWIDHERQKTLERLRAYKEKCPAHRSALKTTCSESMVSNLPGGRSQKRLSTAHHHKTAHPASSKTGSAVPLPEASVRPPEHQDPCGSVPVQAFVPVSDQTLSGSSEDLSLPPQPPAPPLPPPPPPPPPPPLPPALSSFQGTTHQNLGLRTLATEDRPLPLACDPSAGRPCDYQGPGSMDEVLASLRQGKASLRKVETPTLPHPGTSVNEQVLAAIRQGVQLKKVHTGQGVDPGKKSTSDLERSIREALERIKKVSADSEEDNDEPSPTEWDR.

Residues 1–253 are mediates association with membranes; that stretch reads MDSEQPDSLD…EVATSCKLGI (253 aa). Residues 254–623 are mediates interaction with microtubules; sequence LKSLDEDELG…FVPVSDQTLS (370 aa). Coiled coils occupy residues 265–290 and 445–503; these read RRVAALQKEASEWTRQAEEAVGSIQD and LGDN…LHQH. Disordered regions lie at residues 556-661 and 675-699; these read SMVS…SFQG and EDRPLPLACDPSAGRPCDYQGPGSM. The segment covering 566–579 has biased composition (basic residues); it reads SQKRLSTAHHHKTA. The span at 618–628 shows a compositional bias: polar residues; that stretch reads SDQTLSGSSED. Positions 624-793 are mediates actin nucleation; sequence GSSEDLSLPP…DEPSPTEWDR (170 aa). A compositionally biased stretch (pro residues) spans 632 to 654; it reads PPQPPAPPLPPPPPPPPPPPLPP. WH2 domains lie at 698–716 and 728–745; these read SMDEVLASLRQGKASLRKV and VNEQVLAAIRQGVQLKKV. Residues 755–785 adopt a coiled-coil conformation; the sequence is KKSTSDLERSIREALERIKKVSADSEEDNDE. The interval 772-793 is disordered; that stretch reads IKKVSADSEEDNDEPSPTEWDR. Residues 778–787 show a composition bias toward acidic residues; sequence DSEEDNDEPS. Ser-779 is modified (phosphoserine).

In terms of assembly, interacts with ACTR3; indicative for an association with the ARP2/3 complex. Associates with microtubules; in vitro binds to tubulin heterodimer in a 1:1 stoichiometry; decorates microtubules with a repeat of 80 A along protofilaments. Interacts with RHOD (in GTP-bound form).

Its subcellular location is the cytoplasm. The protein resides in the endoplasmic reticulum-Golgi intermediate compartment. It is found in the cytoplasmic vesicle membrane. It localises to the golgi apparatus. The protein localises to the cis-Golgi network. Functionally, acts as a nucleation-promoting factor (NPF) that stimulates Arp2/3-mediated actin polymerization both at the Golgi apparatus and along tubular membranes. Involved as a regulator of Golgi positioning and morphology. Its activity in membrane tubulation requires F-actin and interaction with microtubules. Proposed to use coordinated actin-nucleating and microtubule-binding activities of distinct WHAMM molecules to drive membrane tubule elongation; when MT-bound can recruit and remodel membrane vesicles but is prevented to activate the Arp2/3 complex. Required for RhoD-dependent actin reorganization such as in cell adhesion and cell migration. Participates in vesicle transport between the endoplasmic reticulum and the Golgi complex. The protein is WASP homolog-associated protein with actin, membranes and microtubules (Whamm) of Mus musculus (Mouse).